Reading from the N-terminus, the 405-residue chain is Tryptophan synthase beta chain (405 aa).

Position 95 is an N6-(pyridoxal phosphate)lysine (K95).

It belongs to the TrpB family. As to quaternary structure, tetramer of two alpha and two beta chains. It depends on pyridoxal 5'-phosphate as a cofactor.

It carries out the reaction (1S,2R)-1-C-(indol-3-yl)glycerol 3-phosphate + L-serine = D-glyceraldehyde 3-phosphate + L-tryptophan + H2O. It functions in the pathway amino-acid biosynthesis; L-tryptophan biosynthesis; L-tryptophan from chorismate: step 5/5. In terms of biological role, the beta subunit is responsible for the synthesis of L-tryptophan from indole and L-serine. The polypeptide is Tryptophan synthase beta chain (Pseudomonas putida (strain ATCC 700007 / DSM 6899 / JCM 31910 / BCRC 17059 / LMG 24140 / F1)).